The chain runs to 130 residues: Small ribosomal subunit protein uS8 (130 aa).

It belongs to the universal ribosomal protein uS8 family. In terms of assembly, part of the 30S ribosomal subunit. Contacts proteins S5 and S12.

Its function is as follows. One of the primary rRNA binding proteins, it binds directly to 16S rRNA central domain where it helps coordinate assembly of the platform of the 30S subunit. The polypeptide is Small ribosomal subunit protein uS8 (Shewanella halifaxensis (strain HAW-EB4)).